Consider the following 1012-residue polypeptide: MIPSDMDLIESTAEQPDKLYNINRIRAFKDVPFLIRRTESKDTIVSYADAADEIQVLMNFLRKNGVPDEAGIALRVTEHTPASSLMILAILNNKCHFFPTDKMMLSQDLYSQMSTAGVDYLVANKHLTVAPLYFTFLGSILVFKEDCRLYRVKLKSADETVQSKKPLPANMCYTISTTGTTGKPKLIHVPYECIAPNIVGLSQKLNVSMADIIYLGTPITFDPFVVEFFLALQNGATLLTSRHSMRDSPSKVLSALFPDNLATPGITVLQMTPSLFRQFGASSIKDRVLSGSSSLRVLLLGGEPFPSNVELVTWMHPSVLMQKHICNIYGITEISCWSLLHIVQSLQSPVPLGTPIEEDTVLRIESEDNETSQQGELFLGSVKRRCYIPEVDDQANASQDDSGICFRATGDLVTRQQDGTLFYSERSNDVVKRAGNRISLGLITRKIQKCLPSSELTTCLWLEDLQKLICCIRTLESKTRVQQRVQTFDILSKVSIAEQPDRFVYLQHFPCNVHGKLDKQQLLKMCIPLAQPAQQILKSYLHDRLECVEEPDDSASKKQRLDDAAPCGYDLSFRQAGGTSFHAITICREIGLQMCIDDEQRHLFEMLLDENIPLRTVLRFLDTAKLVANNIKRKNVETAVVVSACQSGLIIKRIEQPVLKLQIYWKVNFEKCIDSPVTEYEGRFICVGAHSKILRTLNPQTGSEYSVVKLPERIECKVTFLTEQLAMVGCYDGCLYGFNPQTGNIVFRVGIGGLIKSQPMLTADGRRIIVCSYADDYNVYCLSAERQEVLWCLRIGEKPIFASPLELPREQSLIVCTLDGSYSRVAITDGSVEWTQKFREPVFSTPVLLESVSNIFLSAEVAGRVHACHVGNGKILATFSTEGNIFSSLVVKTPPTFMGHSFAIFGCIDQHLYCLRCKTGPGGKSVELELHWKVDVGAPIYATPTLLTVQPNGLLVWCAATDGRVMLINFRNGEIQWSDKLPGQVFSSACFIEDLRRVFVGCRDNFLYCLGI.

ATP contacts are provided by residues 177 to 185 (TTGTTGKPK), aspartate 411, arginine 426, and lysine 516.

This sequence belongs to the ATP-dependent AMP-binding enzyme family.

Its function is as follows. Covalently binds beta-alanine in an ATP-dependent manner to form a thioester bond with its phosphopantetheine group and transfers it to an, as yet, unknown acceptor. May be required for a post-translational protein modification or for post-transcriptional modification of an RNA. The sequence is that of Beta-alanine-activating enzyme from Drosophila melanogaster (Fruit fly).